A 367-amino-acid chain; its full sequence is DNA replication and repair protein RecF (367 aa).

Residue 30–37 (GANGSGKT) coordinates ATP.

Belongs to the RecF family.

The protein localises to the cytoplasm. Functionally, the RecF protein is involved in DNA metabolism; it is required for DNA replication and normal SOS inducibility. RecF binds preferentially to single-stranded, linear DNA. It also seems to bind ATP. The protein is DNA replication and repair protein RecF of Pseudomonas syringae pv. tomato (strain ATCC BAA-871 / DC3000).